We begin with the raw amino-acid sequence, 353 residues long: Quinolinate synthase (353 aa).

Residues histidine 47 and serine 68 each coordinate iminosuccinate. Cysteine 113 serves as a coordination point for [4Fe-4S] cluster. Iminosuccinate is bound by residues 139–141 (YAN) and serine 156. Cysteine 200 is a binding site for [4Fe-4S] cluster. Iminosuccinate-binding positions include 226-228 (HPE) and threonine 243. Position 297 (cysteine 297) interacts with [4Fe-4S] cluster.

Belongs to the quinolinate synthase family. Type 1 subfamily. [4Fe-4S] cluster serves as cofactor.

The protein localises to the cytoplasm. The catalysed reaction is iminosuccinate + dihydroxyacetone phosphate = quinolinate + phosphate + 2 H2O + H(+). It participates in cofactor biosynthesis; NAD(+) biosynthesis; quinolinate from iminoaspartate: step 1/1. In terms of biological role, catalyzes the condensation of iminoaspartate with dihydroxyacetone phosphate to form quinolinate. The chain is Quinolinate synthase from Yersinia pseudotuberculosis serotype O:3 (strain YPIII).